The sequence spans 87 residues: uncharacterized protein (87 aa).

The N-terminal stretch at 1-19 (MLVLLVAVLVTAVYAFVHA) is a signal peptide. A helical transmembrane segment spans residues 39–59 (LVILGAAVALASILYPVLGVL).

This sequence to M.leprae ML2453.

It is found in the membrane. This is an uncharacterized protein from Mycobacterium bovis (strain ATCC BAA-935 / AF2122/97).